The following is a 46-amino-acid chain: uncharacterized protein (46 aa).

The chain crosses the membrane as a helical span at residues 12-34 (HFNHFVIALSFIYGLTELGYLLL).

The protein localises to the cell membrane. This is an uncharacterized protein from Bacillus subtilis (strain 168).